The chain runs to 293 residues: Glycine--tRNA ligase alpha subunit (293 aa).

The protein belongs to the class-II aminoacyl-tRNA synthetase family. Tetramer of two alpha and two beta subunits.

The protein resides in the cytoplasm. The catalysed reaction is tRNA(Gly) + glycine + ATP = glycyl-tRNA(Gly) + AMP + diphosphate. This is Glycine--tRNA ligase alpha subunit from Sulfurimonas denitrificans (strain ATCC 33889 / DSM 1251) (Thiomicrospira denitrificans (strain ATCC 33889 / DSM 1251)).